The sequence spans 72 residues: Translation initiation factor IF-1 (72 aa).

The region spanning 1–72 (MSKEDAIEVM…TRGRIVYRYK (72 aa)) is the S1-like domain.

It belongs to the IF-1 family. In terms of assembly, component of the 30S ribosomal translation pre-initiation complex which assembles on the 30S ribosome in the order IF-2 and IF-3, IF-1 and N-formylmethionyl-tRNA(fMet); mRNA recruitment can occur at any time during PIC assembly.

The protein localises to the cytoplasm. One of the essential components for the initiation of protein synthesis. Stabilizes the binding of IF-2 and IF-3 on the 30S subunit to which N-formylmethionyl-tRNA(fMet) subsequently binds. Helps modulate mRNA selection, yielding the 30S pre-initiation complex (PIC). Upon addition of the 50S ribosomal subunit IF-1, IF-2 and IF-3 are released leaving the mature 70S translation initiation complex. This is Translation initiation factor IF-1 from Koribacter versatilis (strain Ellin345).